We begin with the raw amino-acid sequence, 416 residues long: Glutamyl-tRNA reductase (416 aa).

Residues 49-52, Ser-105, 110-112, and Gln-116 contribute to the substrate site; these read TCNR and EPQ. Residue Cys-50 is the Nucleophile of the active site. NADP(+) is bound at residue 185 to 190; the sequence is GAGETI.

This sequence belongs to the glutamyl-tRNA reductase family. In terms of assembly, homodimer.

The enzyme catalyses (S)-4-amino-5-oxopentanoate + tRNA(Glu) + NADP(+) = L-glutamyl-tRNA(Glu) + NADPH + H(+). It participates in porphyrin-containing compound metabolism; protoporphyrin-IX biosynthesis; 5-aminolevulinate from L-glutamyl-tRNA(Glu): step 1/2. Catalyzes the NADPH-dependent reduction of glutamyl-tRNA(Glu) to glutamate 1-semialdehyde (GSA). In Shewanella piezotolerans (strain WP3 / JCM 13877), this protein is Glutamyl-tRNA reductase.